A 119-amino-acid polypeptide reads, in one-letter code: Large ribosomal subunit protein bL20 (119 aa).

The protein belongs to the bacterial ribosomal protein bL20 family.

Binds directly to 23S ribosomal RNA and is necessary for the in vitro assembly process of the 50S ribosomal subunit. It is not involved in the protein synthesizing functions of that subunit. The chain is Large ribosomal subunit protein bL20 from Streptococcus pneumoniae serotype 2 (strain D39 / NCTC 7466).